The sequence spans 244 residues: Globin-like protein 9 (244 aa).

The interval 1–38 (MRRMAKYDRSYSMQDAHGPNGLARRGTQRGCSRSKSTR) is disordered. Positions 47–200 (SLTFSQKQAL…LIDELRGGFE (154 aa)) constitute a Globin domain. His111 and His143 together coordinate heme.

This sequence belongs to the globin family.

This is Globin-like protein 9 from Caenorhabditis briggsae.